Here is a 1822-residue protein sequence, read N- to C-terminus: Integrin beta-4 (1822 aa).

A signal peptide spans 1 to 27 (MAGPRPSPWARLLLAALISVSLSGTLA). Residues 28–710 (NRCKKAPVKS…HKKKDCPPGS (683 aa)) are Extracellular-facing. The region spanning 29 to 73 (RCKKAPVKSCTECVRVDKDCAYCTDEMFRDRRCNTQAELLAAGCQ) is the PSI domain. 8 disulfides stabilise this stretch: Cys30–Cys48, Cys38–Cys455, Cys41–Cys61, Cys51–Cys72, Cys245–Cys288, Cys457–Cys476, Cys468–Cys479, and Cys481–Cys490. The VWFA domain occupies 131-329 (DLYILMDFSN…IPIFAVTNYS (199 aa)). Ser139 and Ser141 together coordinate Mg(2+). Ca(2+)-binding residues include Ser141, Asp144, Asp145, and Asp176. An involved in NRG1- and IGF1-binding region spans residues 194–199 (WPNSDP). Ca(2+)-binding residues include Asn228, Asp230, Pro232, and Glu233. Glu233 is a binding site for Mg(2+). The N-linked (GlcNAc...) asparagine glycan is linked to Asn327. A Ca(2+)-binding site is contributed by Glu350. I-EGF domains lie at 457 to 491 (CELQ…QTCN), 492 to 537 (CSTG…QFCE), 538 to 574 (YDNF…PSCD), and 575 to 615 (CPLS…TICE). Residue Asn491 is glycosylated (N-linked (GlcNAc...) asparagine). 11 disulfides stabilise this stretch: Cys492–Cys520, Cys503–Cys518, Cys512–Cys523, Cys525–Cys536, Cys543–Cys557, Cys551–Cys562, Cys564–Cys573, Cys575–Cys598, Cys582–Cys596, Cys590–Cys601, and Cys603–Cys614. Asn579 carries N-linked (GlcNAc...) asparagine glycosylation. The N-linked (GlcNAc...) asparagine glycan is linked to Asn617. 4 disulfide bridges follow: Cys626–Cys671, Cys632–Cys651, Cys635–Cys648, and Cys680–Cys706. A glycan (N-linked (GlcNAc...) asparagine) is linked at Asn695. Residues 711 to 733 (FWWLIPLLLLLLPLLALLLLLCW) traverse the membrane as a helical segment. Residues 732–749 (CWKYCACCKACLALLPCC) form a palmitoylated on several cysteines region. Residues 734 to 1822 (KYCACCKACL…THMDQQFFQT (1089 aa)) lie on the Cytoplasmic side of the membrane. A phosphoserine mark is found at Ser771, Ser1069, and Ser1119. The Calx-beta domain occupies 979-1084 (VNITIIKEQA…QVRRFHVQLS (106 aa)). The interval 1113 to 1140 (TSQMLSSQPPPHGDLGAPQNPNAKAAGS) is disordered. Fibronectin type-III domains lie at 1129-1218 (APQN…THQE) and 1222-1321 (EPGR…TQPK). The disordered stretch occupies residues 1400 to 1444 (LSASSGRSSDAEAPHGPPDDGGAGGKGGSLPRSATPGPPGEHLVN). The span at 1418–1427 (DDGGAGGKGG) shows a compositional bias: gly residues. Phosphoserine occurs at positions 1454, 1457, and 1474. Thr1487 is subject to Phosphothreonine. At Ser1494 the chain carries Phosphoserine. Positions 1495–1525 (LTRSEHSHSTTLPRDYSTLTSVSSHDSRLTA) are disordered. Polar residues predominate over residues 1503-1518 (STTLPRDYSTLTSVSS). Thr1530 is subject to Phosphothreonine. 2 consecutive Fibronectin type-III domains span residues 1530–1625 (TPTR…VHPQ) and 1643–1739 (APGP…SQDG). A Phosphoserine modification is found at Ser1791.

The protein belongs to the integrin beta chain family. In terms of assembly, heterodimer of an alpha and a beta subunit. Beta-4 associates with alpha-6. Interacts (via cytoplasmic region) with COL17A1 (via cytoplasmic region). Interacts (via cytoplasmic region) with DST isoform 3 (via N-terminus). Isoform beta-4a interacts (via cytoplasmic domain) with DST (via N-terminus). Interacts with RAC1. ITGA6:ITGB4 is found in a ternary complex with NRG1 and ERBB3. ITGA6:ITGB4 is found in a ternary complex with IGF1 and IGF1R. ITGA6:ITGB4 interacts with IGF2. Interacts with TMEM268; this interaction prevents ITGB4 degradation. Post-translationally, palmitoylated by DHHC3 at several cysteines of the membrane-proximal region, enhancing stability and cell surface expression. Palmitoylation also promotes secondary association with tertaspanins. As to expression, integrin alpha-6/beta-4 is predominantly expressed by epithelia. Isoform beta-4D is also expressed in colon and placenta. Isoform beta-4E is also expressed in epidermis, lung, duodenum, heart, spleen and stomach.

The protein localises to the cell membrane. It is found in the cell junction. Its subcellular location is the hemidesmosome. Integrin alpha-6/beta-4 is a receptor for laminin. Plays a critical structural role in the hemidesmosome of epithelial cells. Is required for the regulation of keratinocyte polarity and motility. ITGA6:ITGB4 binds to NRG1 (via EGF domain) and this binding is essential for NRG1-ERBB signaling. ITGA6:ITGB4 binds to IGF1 and this binding is essential for IGF1 signaling. ITGA6:ITGB4 binds to IGF2 and this binding is essential for IGF2 signaling. In Homo sapiens (Human), this protein is Integrin beta-4 (ITGB4).